Consider the following 623-residue polypeptide: Leucine-rich repeat, immunoglobulin-like domain and transmembrane domain-containing protein 1 (623 aa).

The signal sequence occupies residues 1–21; that stretch reads MWVALGMLWLLALGGPHQAWS. Residues 22–59 form the LRRNT domain; sequence FCPSQCSCSLHILSDGSKARTVVCSDPDLTLPPASIPP. The Lumenal portion of the chain corresponds to 22 to 526; the sequence is FCPSQCSCSL…EVVDAEGTQR (505 aa). LRR repeat units lie at residues 60–81, 84–105, 108–128, 132–153, and 156–177; these read DTCK…TFRP, RLEQ…MLRG, RLRE…AALK, QLQL…AVHF, and NLTF…LLDT. N-linked (GlcNAc...) asparagine glycosylation is present at Asn156. The 53-residue stretch at 201-253 folds into the LRRCT domain; the sequence is NPWVCDCRLYDLVHLLDGWASNLIFIEARLRCGSPRSLAGVAFSQLELRKCQS. The Ig-like C2-type domain maps to 266 to 332; sequence PLGSTVLLRC…SGDYICQAKN (67 aa). A disulfide bridge connects residues Cys275 and Cys328. Residues Asn296 and Asn455 are each glycosylated (N-linked (GlcNAc...) asparagine). The region spanning 430 to 518 is the Fibronectin type-III domain; sequence MVRSLKVVGD…QCVIFSTDEV (89 aa). An LRR 6 repeat occupies 525–548; it reads QRLINMVVISVAAIIALPPTLLVC. Residues 527-547 traverse the membrane as a helical segment; it reads LINMVVISVAAIIALPPTLLV. Topologically, residues 548–623 are cytoplasmic; the sequence is CCGALRRRCH…GGRRINEYFC (76 aa).

In terms of assembly, homodimer. Interacts with LRIT2; may form a heterodimer with LRIT2. Interacts (via its N-terminal extracellular domain) with metabotropic glutamate receptor GRM6. Interacts (via its extreme C-terminus) with the scaffold protein FRMPD2 (via the third PDZ domain); the interaction leads to their colocalization in photoreceptor synapses. As to expression, retina, outer segments of photoreceptor cells.

It localises to the endoplasmic reticulum membrane. The protein localises to the cell projection. Its subcellular location is the dendrite. In terms of biological role, photoreceptor synaptic protein essential for normal vision. Involved in synapse formation in cone photoreceptor cells. This Rattus norvegicus (Rat) protein is Leucine-rich repeat, immunoglobulin-like domain and transmembrane domain-containing protein 1 (Lrit1).